Reading from the N-terminus, the 1268-residue chain is Neurocan core protein (1268 aa).

Positions Met-1–Gly-22 are cleaved as a signal peptide. Residues Arg-37–Thr-157 enclose the Ig-like V-type domain. Intrachain disulfides connect Cys-58–Cys-139, Cys-181–Cys-252, Cys-205–Cys-226, Cys-279–Cys-354, and Cys-303–Cys-324. An N-linked (GlcNAc...) asparagine glycan is attached at Asn-121. Link domains lie at Val-159 to Ala-254 and Gly-258 to Arg-356. Residue Asn-339 is glycosylated (N-linked (GlcNAc...) asparagine). Disordered stretches follow at residues Gln-363 to Pro-391, Pro-406 to Ser-442, Pro-472 to His-540, and Ile-574 to Ser-630. O-linked (Xyl...) (chondroitin sulfate) serine glycans are attached at residues Ser-380 and Ser-410. Positions Thr-419 to Ser-430 are enriched in polar residues. Residues Ser-575 to Pro-585 show a composition bias toward low complexity. Over residues Pro-608–Gly-617 the composition is skewed to pro residues. Over residues Pro-618 to Ser-630 the composition is skewed to low complexity. Asn-742 carries N-linked (GlcNAc...) asparagine glycosylation. The EGF-like 1 domain occupies Pro-960–Glu-996. 11 cysteine pairs are disulfide-bonded: Cys-964–Cys-975, Cys-969–Cys-984, Cys-986–Cys-995, Cys-1002–Cys-1013, Cys-1007–Cys-1022, Cys-1024–Cys-1033, Cys-1040–Cys-1051, Cys-1068–Cys-1160, Cys-1136–Cys-1152, Cys-1167–Cys-1210, and Cys-1196–Cys-1223. Residue Asn-978 is glycosylated (N-linked (GlcNAc...) asparagine). An EGF-like 2; calcium-binding domain is found at Asp-998–Glu-1034. Residues Asp-1036–Val-1165 enclose the C-type lectin domain. The region spanning Val-1165–Lys-1225 is the Sushi domain. An N-linked (GlcNAc...) asparagine glycan is attached at Asn-1175. A compositionally biased stretch (basic residues) spans Arg-1228–His-1255. The disordered stretch occupies residues Arg-1228 to Cys-1268.

The protein belongs to the aggrecan/versican proteoglycan family. Post-translationally, O-glycosylated; contains chondroitin sulfate. Brain.

Its subcellular location is the secreted. In terms of biological role, may modulate neuronal adhesion and neurite growth during development by binding to neural cell adhesion molecules (NG-CAM and N-CAM). Chondroitin sulfate proteoglycan; binds to hyaluronic acid. The chain is Neurocan core protein (Ncan) from Mus musculus (Mouse).